The chain runs to 292 residues: Formamidopyrimidine-DNA glycosylase (292 aa).

The Schiff-base intermediate with DNA role is filled by P2. E3 (proton donor) is an active-site residue. Residue K61 is the Proton donor; for beta-elimination activity of the active site. 3 residues coordinate DNA: H103, R122, and K168. Residues 254 to 288 form an FPG-type zinc finger; the sequence is DAYGREGEHCRRCGAVMRREKFMNRSSFYCPRCQP. Catalysis depends on R278, which acts as the Proton donor; for delta-elimination activity.

Belongs to the FPG family. Monomer. Zn(2+) serves as cofactor.

The enzyme catalyses Hydrolysis of DNA containing ring-opened 7-methylguanine residues, releasing 2,6-diamino-4-hydroxy-5-(N-methyl)formamidopyrimidine.. The catalysed reaction is 2'-deoxyribonucleotide-(2'-deoxyribose 5'-phosphate)-2'-deoxyribonucleotide-DNA = a 3'-end 2'-deoxyribonucleotide-(2,3-dehydro-2,3-deoxyribose 5'-phosphate)-DNA + a 5'-end 5'-phospho-2'-deoxyribonucleoside-DNA + H(+). Functionally, involved in base excision repair of DNA damaged by oxidation or by mutagenic agents. Acts as a DNA glycosylase that recognizes and removes damaged bases. Has a preference for oxidized purines, such as 7,8-dihydro-8-oxoguanine (8-oxoG). Has AP (apurinic/apyrimidinic) lyase activity and introduces nicks in the DNA strand. Cleaves the DNA backbone by beta-delta elimination to generate a single-strand break at the site of the removed base with both 3'- and 5'-phosphates. The protein is Formamidopyrimidine-DNA glycosylase of Mycobacterium ulcerans (strain Agy99).